The following is a 103-amino-acid chain: Large ribosomal subunit protein uL24 (103 aa).

It belongs to the universal ribosomal protein uL24 family. Part of the 50S ribosomal subunit.

Its function is as follows. One of two assembly initiator proteins, it binds directly to the 5'-end of the 23S rRNA, where it nucleates assembly of the 50S subunit. Functionally, one of the proteins that surrounds the polypeptide exit tunnel on the outside of the subunit. The chain is Large ribosomal subunit protein uL24 from Roseobacter denitrificans (strain ATCC 33942 / OCh 114) (Erythrobacter sp. (strain OCh 114)).